Here is a 227-residue protein sequence, read N- to C-terminus: GFP-like non-fluorescent chromoprotein (227 aa).

The segment at residues 63 to 65 (AYG) is a cross-link (5-imidazolinone (Ala-Gly)). Tyrosine 64 is modified (2,3-didehydrotyrosine).

It belongs to the GFP family. As to quaternary structure, homotetramer. Contains a chromophore consisting of modified amino acid residues. The chromophore is formed by autocatalytic backbone condensation between Xaa-N and Gly-(N+2), and oxidation of Tyr-(N+1) to didehydrotyrosine. Maturation of the chromophore requires nothing other than molecular oxygen. The precise stereochemistry of the tyrosine has not been determined.

In terms of biological role, non-fluorescent pigment protein that is mauve in color. The wild-type form is non-fluorescent. In Condylactis gigantea (Giant Caribbean anemone), this protein is GFP-like non-fluorescent chromoprotein.